Reading from the N-terminus, the 217-residue chain is Thiamine-phosphate synthase (217 aa).

4-amino-2-methyl-5-(diphosphooxymethyl)pyrimidine is bound by residues 37–41 (QFREK) and Asn-72. Mg(2+)-binding residues include Asp-73 and Asp-92. A 4-amino-2-methyl-5-(diphosphooxymethyl)pyrimidine-binding site is contributed by Ser-110. 136 to 138 (TVS) is a binding site for 2-[(2R,5Z)-2-carboxy-4-methylthiazol-5(2H)-ylidene]ethyl phosphate. 4-amino-2-methyl-5-(diphosphooxymethyl)pyrimidine is bound at residue Lys-139. 2-[(2R,5Z)-2-carboxy-4-methylthiazol-5(2H)-ylidene]ethyl phosphate is bound by residues Gly-168 and 188 to 189 (IS).

It belongs to the thiamine-phosphate synthase family. The cofactor is Mg(2+).

The enzyme catalyses 2-[(2R,5Z)-2-carboxy-4-methylthiazol-5(2H)-ylidene]ethyl phosphate + 4-amino-2-methyl-5-(diphosphooxymethyl)pyrimidine + 2 H(+) = thiamine phosphate + CO2 + diphosphate. It catalyses the reaction 2-(2-carboxy-4-methylthiazol-5-yl)ethyl phosphate + 4-amino-2-methyl-5-(diphosphooxymethyl)pyrimidine + 2 H(+) = thiamine phosphate + CO2 + diphosphate. It carries out the reaction 4-methyl-5-(2-phosphooxyethyl)-thiazole + 4-amino-2-methyl-5-(diphosphooxymethyl)pyrimidine + H(+) = thiamine phosphate + diphosphate. It participates in cofactor biosynthesis; thiamine diphosphate biosynthesis; thiamine phosphate from 4-amino-2-methyl-5-diphosphomethylpyrimidine and 4-methyl-5-(2-phosphoethyl)-thiazole: step 1/1. Its function is as follows. Condenses 4-methyl-5-(beta-hydroxyethyl)thiazole monophosphate (THZ-P) and 2-methyl-4-amino-5-hydroxymethyl pyrimidine pyrophosphate (HMP-PP) to form thiamine monophosphate (TMP). This Anoxybacillus flavithermus (strain DSM 21510 / WK1) protein is Thiamine-phosphate synthase.